The sequence spans 426 residues: ATP-dependent Clp protease ATP-binding subunit ClpX (426 aa).

One can recognise a ClpX-type ZB domain in the interval methionine 1 to proline 52. Zn(2+) is bound by residues cysteine 8, cysteine 11, cysteine 33, and cysteine 36. Proline 129–leucine 136 contributes to the ATP binding site.

Belongs to the ClpX chaperone family. As to quaternary structure, component of the ClpX-ClpP complex. Forms a hexameric ring that, in the presence of ATP, binds to fourteen ClpP subunits assembled into a disk-like structure with a central cavity, resembling the structure of eukaryotic proteasomes.

ATP-dependent specificity component of the Clp protease. It directs the protease to specific substrates. Can perform chaperone functions in the absence of ClpP. The sequence is that of ATP-dependent Clp protease ATP-binding subunit ClpX from Helicobacter hepaticus (strain ATCC 51449 / 3B1).